We begin with the raw amino-acid sequence, 436 residues long: Gamma-glutamyl phosphate reductase (436 aa).

This sequence belongs to the gamma-glutamyl phosphate reductase family.

The protein resides in the cytoplasm. It catalyses the reaction L-glutamate 5-semialdehyde + phosphate + NADP(+) = L-glutamyl 5-phosphate + NADPH + H(+). It functions in the pathway amino-acid biosynthesis; L-proline biosynthesis; L-glutamate 5-semialdehyde from L-glutamate: step 2/2. Its function is as follows. Catalyzes the NADPH-dependent reduction of L-glutamate 5-phosphate into L-glutamate 5-semialdehyde and phosphate. The product spontaneously undergoes cyclization to form 1-pyrroline-5-carboxylate. In Salinibacter ruber (strain DSM 13855 / M31), this protein is Gamma-glutamyl phosphate reductase.